A 216-amino-acid polypeptide reads, in one-letter code: UPF0598 protein C8orf82 (216 aa).

This sequence belongs to the UPF0598 family.

In Homo sapiens (Human), this protein is UPF0598 protein C8orf82 (C8orf82).